We begin with the raw amino-acid sequence, 912 residues long: Metabotropic glutamate receptor 4 (912 aa).

The first 32 residues, 1–32 (MSGKGGWAWWWARLPLCLLLSLYGSWVPSSLG), serve as a signal peptide directing secretion. Residues 33–586 (KPKGHPHMNS…PIVKLEWDSP (554 aa)) lie on the Extracellular side of the membrane. A disulfide bridge connects residues Cys-67 and Cys-109. An N-linked (GlcNAc...) asparagine glycan is attached at Asn-98. L-glutamate contacts are provided by residues Ser-159, 180 to 182 (AST), and Tyr-230. Disulfide bonds link Cys-249-Cys-538, Cys-372-Cys-388, Cys-428-Cys-435, Cys-520-Cys-539, Cys-524-Cys-542, Cys-545-Cys-557, and Cys-560-Cys-573. Asn-301 carries an N-linked (GlcNAc...) asparagine glycan. Asp-312 is an L-glutamate binding site. An L-glutamate-binding site is contributed by Lys-405. A helical membrane pass occupies residues 587–607 (WAVLPLFLAVVGIAATLFVVV). Residues 608 to 624 (TFVRYNDTPIVKASGRE) lie on the Cytoplasmic side of the membrane. A helical transmembrane segment spans residues 625–645 (LSYVLLAGIFLCYATTFLMIA). Residues 646-653 (EPDLGTCS) are Extracellular-facing. Residues 654 to 671 (LRRIFLGLGMSISYAALL) traverse the membrane as a helical segment. Topologically, residues 672-699 (TKTNRIYRIFEQGKRSVSAPRFISPASQ) are cytoplasmic. The chain crosses the membrane as a helical span at residues 700-720 (LAITFVLISLQLLCICVWFVV). Residues 721-751 (DPSHSVVDFQDQRTLDPRFARGVLKCDISDL) are Extracellular-facing. Residues 752–772 (SLICLLGYSMLLMVTCTVYAI) form a helical membrane-spanning segment. The Cytoplasmic portion of the chain corresponds to 773-786 (KTRGVPETFNEAKP). The chain crosses the membrane as a helical span at residues 787 to 807 (IGFTMYTTCIVWLAFIPIFFG). At 808–826 (TSQSADKLYIQTTTLTVSV) the chain is on the extracellular side. The chain crosses the membrane as a helical span at residues 827–847 (SLSASVSLGMLYMPKVYIILF). Residues 848–912 (HPEQNVPKRK…TYVTYTNHAI (65 aa)) lie on the Cytoplasmic side of the membrane.

This sequence belongs to the G-protein coupled receptor 3 family. In terms of assembly, interacts with PICK1.

Its subcellular location is the cell membrane. G-protein coupled receptor for glutamate. Ligand binding causes a conformation change that triggers signaling via guanine nucleotide-binding proteins (G proteins) and modulates the activity of down-stream effectors. Signaling inhibits adenylate cyclase activity. This Mus musculus (Mouse) protein is Metabotropic glutamate receptor 4 (Grm4).